A 516-amino-acid polypeptide reads, in one-letter code: GMP synthase [glutamine-hydrolyzing] (516 aa).

Residues 7–199 form the Glutamine amidotransferase type-1 domain; the sequence is KIIILDFGSQ…VFGLCKCQAT (193 aa). Cys-84 acts as the Nucleophile in catalysis. Residues His-173 and Glu-175 contribute to the active site. The region spanning 200 to 391 is the GMPS ATP-PPase domain; that stretch reads WTMQGFIESN…LGLPDEAVHR (192 aa). 227–233 is an ATP binding site; sequence SGGVDSS.

Homodimer.

It carries out the reaction XMP + L-glutamine + ATP + H2O = GMP + L-glutamate + AMP + diphosphate + 2 H(+). The protein operates within purine metabolism; GMP biosynthesis; GMP from XMP (L-Gln route): step 1/1. Functionally, catalyzes the synthesis of GMP from XMP. The sequence is that of GMP synthase [glutamine-hydrolyzing] from Desulfotalea psychrophila (strain LSv54 / DSM 12343).